Reading from the N-terminus, the 95-residue chain is Small ribosomal subunit protein bS6 (95 aa).

It belongs to the bacterial ribosomal protein bS6 family.

Binds together with bS18 to 16S ribosomal RNA. This chain is Small ribosomal subunit protein bS6, found in Clostridium novyi (strain NT).